We begin with the raw amino-acid sequence, 159 residues long: Ribosomal RNA large subunit methyltransferase H (159 aa).

Residues Leu-76, Gly-108, and 127–132 contribute to the S-adenosyl-L-methionine site; that span reads FSKMTF.

Belongs to the RNA methyltransferase RlmH family. Homodimer.

The protein resides in the cytoplasm. It catalyses the reaction pseudouridine(1915) in 23S rRNA + S-adenosyl-L-methionine = N(3)-methylpseudouridine(1915) in 23S rRNA + S-adenosyl-L-homocysteine + H(+). Functionally, specifically methylates the pseudouridine at position 1915 (m3Psi1915) in 23S rRNA. This chain is Ribosomal RNA large subunit methyltransferase H, found in Staphylococcus carnosus (strain TM300).